The sequence spans 159 residues: MPREKGRKVVASNRKARHDYSILDTYEAGMALTGTEVKSLRAGRASLVDAFAQERNGELYLHGMHIPEYVQGTWTNHEPRRTRKLLLNRTEIDRLIGKTRESGLTLVPLQVYFSDGWAKVEIGVAKGKKAYDKRQDLAKRDAQREMARAAGRRSKGMDD.

A compositionally biased stretch (basic and acidic residues) spans 133–147 (KRQDLAKRDAQREMA). The segment at 133 to 159 (KRQDLAKRDAQREMARAAGRRSKGMDD) is disordered. The span at 150–159 (AGRRSKGMDD) shows a compositional bias: basic residues.

Belongs to the SmpB family.

The protein resides in the cytoplasm. Required for rescue of stalled ribosomes mediated by trans-translation. Binds to transfer-messenger RNA (tmRNA), required for stable association of tmRNA with ribosomes. tmRNA and SmpB together mimic tRNA shape, replacing the anticodon stem-loop with SmpB. tmRNA is encoded by the ssrA gene; the 2 termini fold to resemble tRNA(Ala) and it encodes a 'tag peptide', a short internal open reading frame. During trans-translation Ala-aminoacylated tmRNA acts like a tRNA, entering the A-site of stalled ribosomes, displacing the stalled mRNA. The ribosome then switches to translate the ORF on the tmRNA; the nascent peptide is terminated with the 'tag peptide' encoded by the tmRNA and targeted for degradation. The ribosome is freed to recommence translation, which seems to be the essential function of trans-translation. The protein is SsrA-binding protein of Salinispora arenicola (strain CNS-205).